A 164-amino-acid chain; its full sequence is uncharacterized protein (164 aa).

This is an uncharacterized protein from Acanthamoeba polyphaga mimivirus (APMV).